Reading from the N-terminus, the 262-residue chain is Protein crossbronx-like (262 aa).

Residues 15–179 (RQGYQVLAEY…VQELALFTKK (165 aa)) form the UBC core domain.

The protein belongs to the ubiquitin-conjugating enzyme family. FTS subfamily.

In Drosophila pseudoobscura pseudoobscura (Fruit fly), this protein is Protein crossbronx-like.